A 341-amino-acid chain; its full sequence is UDP-3-O-acylglucosamine N-acyltransferase (341 aa).

The active-site Proton acceptor is His-239.

This sequence belongs to the transferase hexapeptide repeat family. LpxD subfamily. As to quaternary structure, homotrimer.

It catalyses the reaction a UDP-3-O-[(3R)-3-hydroxyacyl]-alpha-D-glucosamine + a (3R)-hydroxyacyl-[ACP] = a UDP-2-N,3-O-bis[(3R)-3-hydroxyacyl]-alpha-D-glucosamine + holo-[ACP] + H(+). It participates in bacterial outer membrane biogenesis; LPS lipid A biosynthesis. Its function is as follows. Catalyzes the N-acylation of UDP-3-O-acylglucosamine using 3-hydroxyacyl-ACP as the acyl donor. Is involved in the biosynthesis of lipid A, a phosphorylated glycolipid that anchors the lipopolysaccharide to the outer membrane of the cell. The sequence is that of UDP-3-O-acylglucosamine N-acyltransferase from Idiomarina loihiensis (strain ATCC BAA-735 / DSM 15497 / L2-TR).